The primary structure comprises 146 residues: Large ribosomal subunit protein uL15 (146 aa).

The disordered stretch occupies residues 1 to 51 (MQLNTLKPAEGSKKNRRRVGRGIGSGLGKTAGRGHKGQKSRSGGFHKVGFE). Positions 21-31 (RGIGSGLGKTA) are enriched in gly residues.

This sequence belongs to the universal ribosomal protein uL15 family. In terms of assembly, part of the 50S ribosomal subunit.

Binds to the 23S rRNA. This Polynucleobacter asymbioticus (strain DSM 18221 / CIP 109841 / QLW-P1DMWA-1) (Polynucleobacter necessarius subsp. asymbioticus) protein is Large ribosomal subunit protein uL15.